A 378-amino-acid chain; its full sequence is 4-hydroxy-3-methylbut-2-en-1-yl diphosphate synthase (flavodoxin) (378 aa).

Residues C268, C271, C303, and E310 each contribute to the [4Fe-4S] cluster site.

This sequence belongs to the IspG family. The cofactor is [4Fe-4S] cluster.

The enzyme catalyses (2E)-4-hydroxy-3-methylbut-2-enyl diphosphate + oxidized [flavodoxin] + H2O + 2 H(+) = 2-C-methyl-D-erythritol 2,4-cyclic diphosphate + reduced [flavodoxin]. The protein operates within isoprenoid biosynthesis; isopentenyl diphosphate biosynthesis via DXP pathway; isopentenyl diphosphate from 1-deoxy-D-xylulose 5-phosphate: step 5/6. In terms of biological role, converts 2C-methyl-D-erythritol 2,4-cyclodiphosphate (ME-2,4cPP) into 1-hydroxy-2-methyl-2-(E)-butenyl 4-diphosphate. This chain is 4-hydroxy-3-methylbut-2-en-1-yl diphosphate synthase (flavodoxin), found in Corynebacterium glutamicum (strain ATCC 13032 / DSM 20300 / JCM 1318 / BCRC 11384 / CCUG 27702 / LMG 3730 / NBRC 12168 / NCIMB 10025 / NRRL B-2784 / 534).